Consider the following 368-residue polypeptide: Isopentenyl-diphosphate delta-isomerase (368 aa).

7-8 lines the substrate pocket; the sequence is RK. FMN is bound by residues Thr-65, 66 to 68, Ser-96, and Asn-125; that span reads GMT. A substrate-binding site is contributed by 96–98; the sequence is SQR. Gln-160 is a substrate binding site. Residue Glu-161 participates in Mg(2+) binding. Residues Lys-193, Ser-218, Thr-223, 275–277, and 296–297 contribute to the FMN site; these read GIR and AL.

The protein belongs to the IPP isomerase type 2 family. Homooctamer. Dimer of tetramers. The cofactor is FMN. Requires NADPH as cofactor. It depends on Mg(2+) as a cofactor.

The protein localises to the cytoplasm. It catalyses the reaction isopentenyl diphosphate = dimethylallyl diphosphate. In terms of biological role, involved in the biosynthesis of isoprenoids. Catalyzes the 1,3-allylic rearrangement of the homoallylic substrate isopentenyl (IPP) to its allylic isomer, dimethylallyl diphosphate (DMAPP). This is Isopentenyl-diphosphate delta-isomerase from Saccharolobus shibatae (strain ATCC 51178 / DSM 5389 / JCM 8931 / NBRC 15437 / B12) (Sulfolobus shibatae).